The primary structure comprises 276 residues: UPF0276 protein AM1_3026 (276 aa).

The protein belongs to the UPF0276 family.

In Acaryochloris marina (strain MBIC 11017), this protein is UPF0276 protein AM1_3026.